Consider the following 209-residue polypeptide: Uracil phosphoribosyltransferase (209 aa).

Residues R79, R104, and 131–139 (DPMLATGGS) each bind 5-phospho-alpha-D-ribose 1-diphosphate. Uracil contacts are provided by residues I194 and 199–201 (GDA). D200 is a binding site for 5-phospho-alpha-D-ribose 1-diphosphate.

Belongs to the UPRTase family. Requires Mg(2+) as cofactor.

The catalysed reaction is UMP + diphosphate = 5-phospho-alpha-D-ribose 1-diphosphate + uracil. Its pathway is pyrimidine metabolism; UMP biosynthesis via salvage pathway; UMP from uracil: step 1/1. With respect to regulation, allosterically activated by GTP. In terms of biological role, catalyzes the conversion of uracil and 5-phospho-alpha-D-ribose 1-diphosphate (PRPP) to UMP and diphosphate. The polypeptide is Uracil phosphoribosyltransferase (Clostridium novyi (strain NT)).